Reading from the N-terminus, the 67-residue chain is Brevinin-1CDYc (67 aa).

The N-terminal stretch at 1-22 (MFTLKKSLLLIFFLGTINLSLC) is a signal peptide. The propeptide occupies 23–45 (EEERNADEEERRDDPEERDVEVE). Cys-61 and Cys-67 form a disulfide bridge.

This sequence belongs to the frog skin active peptide (FSAP) family. Brevinin subfamily. As to expression, expressed by the skin glands.

Its subcellular location is the secreted. Its function is as follows. Antimicrobial peptide. The sequence is that of Brevinin-1CDYc from Rana huanrensis (Huanren frog).